Here is a 513-residue protein sequence, read N- to C-terminus: ATP synthase subunit alpha 1 (513 aa).

169–176 (GDRQTGKT) contacts ATP.

Belongs to the ATPase alpha/beta chains family. As to quaternary structure, F-type ATPases have 2 components, CF(1) - the catalytic core - and CF(0) - the membrane proton channel. CF(1) has five subunits: alpha(3), beta(3), gamma(1), delta(1), epsilon(1). CF(0) has three main subunits: a(1), b(2) and c(9-12). The alpha and beta chains form an alternating ring which encloses part of the gamma chain. CF(1) is attached to CF(0) by a central stalk formed by the gamma and epsilon chains, while a peripheral stalk is formed by the delta and b chains.

Its subcellular location is the cell inner membrane. It carries out the reaction ATP + H2O + 4 H(+)(in) = ADP + phosphate + 5 H(+)(out). In terms of biological role, produces ATP from ADP in the presence of a proton gradient across the membrane. The alpha chain is a regulatory subunit. In Methylococcus capsulatus (strain ATCC 33009 / NCIMB 11132 / Bath), this protein is ATP synthase subunit alpha 1.